Consider the following 361-residue polypeptide: MISKDEILEIFDKYNKDEITIATLGSHTSLHILKGAKLEGFSTVCITMKGRDVPYKRFKVADKFIYVDNFSDIKNEEIQEKLRELNSIVVPHGSFIAYCGLDNVENSFLVPMFGNRRILRWESERSLEGKLLREAGLRVPKKYESPEDIDGTVIVKFPGARGGRGYFIASSTEEFYKKAEDLKKRGILTDEDIANAHIEEYVVGTNFCIHYFYSPLKDEVELLGMDKRYESNIDGLVRIPAKDQLEMNINPSYVITGNIPVVIRESLLPQVFEMGDKLVAKAKELVPPGMIGPFCLQSLCNENLELVVFEMSARVDGGTNSFMNGGPYSFLYNGEPLSMGQRIAREIKMALQLDMIDKIIS.

5-amino-1-(5-phospho-beta-D-ribosyl)imidazole-4-carboxamide is bound by residues His27 and Ser94. The ATP-grasp domain maps to 116-348 (RRILRWESER…MGQRIAREIK (233 aa)). Residues 156–166 (KFPGARGGRGY), 199–202 (EEYV), and Glu230 each bind ATP. Residue Asn258 coordinates 5-amino-1-(5-phospho-beta-D-ribosyl)imidazole-4-carboxamide. Gln297 and Glu310 together coordinate Mg(2+).

It belongs to the phosphohexose mutase family. Homohexamer. Dimer of trimers. Mg(2+) is required as a cofactor. It depends on Mn(2+) as a cofactor.

The catalysed reaction is 5-amino-1-(5-phospho-beta-D-ribosyl)imidazole-4-carboxamide + formate + ATP = 5-formamido-1-(5-phospho-D-ribosyl)imidazole-4-carboxamide + ADP + phosphate. It participates in purine metabolism; IMP biosynthesis via de novo pathway; 5-formamido-1-(5-phospho-D-ribosyl)imidazole-4-carboxamide from 5-amino-1-(5-phospho-D-ribosyl)imidazole-4-carboxamide (formate route): step 1/1. Inhibited by ADP. In terms of biological role, catalyzes the ATP- and formate-dependent formylation of 5-aminoimidazole-4-carboxamide-1-beta-d-ribofuranosyl 5'-monophosphate (AICAR) to 5-formaminoimidazole-4-carboxamide-1-beta-d-ribofuranosyl 5'-monophosphate (FAICAR) in the absence of folates. This chain is 5-formaminoimidazole-4-carboxamide-1-(beta)-D-ribofuranosyl 5'-monophosphate synthetase, found in Methanocaldococcus jannaschii (strain ATCC 43067 / DSM 2661 / JAL-1 / JCM 10045 / NBRC 100440) (Methanococcus jannaschii).